An 887-amino-acid polypeptide reads, in one-letter code: Alanine--tRNA ligase (887 aa).

Zn(2+) is bound by residues histidine 564, histidine 568, cysteine 675, and histidine 679. Residues 851 to 866 show a composition bias toward gly residues; it reads GQGGGGRPDMAQGGGP. A disordered region spans residues 851-871; it reads GQGGGGRPDMAQGGGPDGDKA.

Belongs to the class-II aminoacyl-tRNA synthetase family. Zn(2+) serves as cofactor.

The protein localises to the cytoplasm. It catalyses the reaction tRNA(Ala) + L-alanine + ATP = L-alanyl-tRNA(Ala) + AMP + diphosphate. Functionally, catalyzes the attachment of alanine to tRNA(Ala) in a two-step reaction: alanine is first activated by ATP to form Ala-AMP and then transferred to the acceptor end of tRNA(Ala). Also edits incorrectly charged Ser-tRNA(Ala) and Gly-tRNA(Ala) via its editing domain. The sequence is that of Alanine--tRNA ligase from Rhizorhabdus wittichii (strain DSM 6014 / CCUG 31198 / JCM 15750 / NBRC 105917 / EY 4224 / RW1) (Sphingomonas wittichii).